The primary structure comprises 374 residues: MSDNSQKKVIVGMSGGVDSSVSAYLLKQQGYQVEGLFMKNWEEDDNEEYCTAAEDLADAQAVCDKLDIHLHTINFAAEYWDNVFEYFLAEYKAGRTPNPDILCNKEIKFKAFLEFADEVLDADYIAMGHYVRRSFPENDEKPQMLRGLDSNKDQSYFLYTLSNEQIARSLFPVGDLEKPEVRRIAEEQDLITAKKKDSTGICFIGERKFTEFLGRYLPAQPGNIETPEGEVIGQHQGLMYHTLGQRKGLHIGGRKGGGGNEDPWFVGEKDLERNVLIAVQGKDHPMLKSEGLLASQLHWVDREPIRDVMKCTVKTRYRQEDIPCTIIPIDDENIKVIFDEPQIAVTPGQSAVFYKDDVCLGGSIIEQRIKYSQA.

ATP is bound by residues 12–19 (GMSGGVDS) and Met-38. The tract at residues 98 to 100 (NPD) is interaction with target base in tRNA. Cys-103 acts as the Nucleophile in catalysis. A disulfide bridge links Cys-103 with Cys-202. Gly-128 is an ATP binding site. An interaction with tRNA region spans residues 152 to 154 (KDQ). The Cysteine persulfide intermediate role is filled by Cys-202. The interaction with tRNA stretch occupies residues 316 to 317 (RY).

It belongs to the MnmA/TRMU family.

The protein resides in the cytoplasm. It catalyses the reaction S-sulfanyl-L-cysteinyl-[protein] + uridine(34) in tRNA + AH2 + ATP = 2-thiouridine(34) in tRNA + L-cysteinyl-[protein] + A + AMP + diphosphate + H(+). Its function is as follows. Catalyzes the 2-thiolation of uridine at the wobble position (U34) of tRNA, leading to the formation of s(2)U34. The sequence is that of tRNA-specific 2-thiouridylase MnmA from Vibrio campbellii (strain ATCC BAA-1116).